A 392-amino-acid chain; its full sequence is Stilbene synthase 4 (392 aa).

Position 55-58 (55-58) interacts with substrate; sequence KFNR. The active site involves cysteine 164. Residues leucine 267 and 305–307 contribute to the substrate site; that span reads GGP.

Belongs to the thiolase-like superfamily. Chalcone/stilbene synthases family. As to quaternary structure, homodimer.

The protein localises to the cytoplasm. The catalysed reaction is 4-coumaroyl-CoA + 3 malonyl-CoA + 3 H(+) = trans-resveratrol + 4 CO2 + 4 CoA. It functions in the pathway phytoalexin biosynthesis; 3,4',5-trihydroxystilbene biosynthesis; 3,4',5-trihydroxystilbene from trans-4-coumarate: step 2/2. Functionally, mediates resistance to pathogens which are sensitive to stilbenes. This is Stilbene synthase 4 from Vitis vinifera (Grape).